A 249-amino-acid polypeptide reads, in one-letter code: Thioesterase TesA (249 aa).

Catalysis depends on residues Ser-92, Asp-196, and His-224.

It belongs to the thioesterase family.

It catalyses the reaction a fatty acyl-CoA + H2O = a fatty acid + CoA + H(+). Its function is as follows. Involved in the synthesis of both phthiocerol dimycocerosates (PDIMs) and phenolic glycolipids (PGLs), which are structurally related lipids non-covalently bound to the outer cell wall layer of M.tuberculosis and are important virulence factors. In Mycobacterium marinum (strain ATCC BAA-535 / M), this protein is Thioesterase TesA.